Reading from the N-terminus, the 237-residue chain is Uridylate kinase (237 aa).

10–13 (KFSG) serves as a coordination point for ATP. The segment at 18–23 (GDSGFG) is involved in allosteric activation by GTP. UMP is bound at residue Gly-52. Residues Gly-53 and Arg-57 each coordinate ATP. Residues Asp-73 and 134–141 (TGNPFFTT) each bind UMP. Thr-161, Tyr-167, and Asp-170 together coordinate ATP.

It belongs to the UMP kinase family. In terms of assembly, homohexamer.

The protein resides in the cytoplasm. It carries out the reaction UMP + ATP = UDP + ADP. Its pathway is pyrimidine metabolism; CTP biosynthesis via de novo pathway; UDP from UMP (UMPK route): step 1/1. Allosterically activated by GTP. Inhibited by UTP. Its function is as follows. Catalyzes the reversible phosphorylation of UMP to UDP. The chain is Uridylate kinase from Campylobacter hominis (strain ATCC BAA-381 / DSM 21671 / CCUG 45161 / LMG 19568 / NCTC 13146 / CH001A).